Consider the following 169-residue polypeptide: uncharacterized protein (169 aa).

The Nudix hydrolase domain occupies 35–163 (LIGRGTFILL…PYCPDSLQAL (129 aa)). The short motif at 81–103 (YADSAARELEEELGIRDAVLREH) is the Nudix box element. Residues Glu-88 and Glu-92 each contribute to the Mg(2+) site.

The protein belongs to the Nudix hydrolase family. Requires Mg(2+) as cofactor.

This is an uncharacterized protein from Pseudomonas aeruginosa (strain ATCC 15692 / DSM 22644 / CIP 104116 / JCM 14847 / LMG 12228 / 1C / PRS 101 / PAO1).